The chain runs to 327 residues: Movement protein (327 aa).

Residues 297-327 adopt a coiled-coil conformation; the sequence is SASSSNTENELARVSQNIDLLKNKLKEICGE.

It belongs to the caulimoviridae movement protein family. In terms of assembly, homotrimer, through the coiled-coil domain. Interacts with VAP. May interact (via N-terminus) with host prenylated Rab acceptor protein 1D (PRA1D).

It localises to the host cell junction. Its subcellular location is the host plasmodesma. Functionally, transports viral genome to neighboring plant cells directly through plasmosdesmata, without any budding. The movement protein allows efficient cell to cell propagation, by bypassing the host cell wall barrier. Acts by forming tubules structures that increase the size exclusion limit (SEL) of plasmodesmata, thereby allowing viral ribonucleocapsids to spread directly to neighboring cells. The sequence is that of Movement protein from Cauliflower mosaic virus (strain W260) (CaMV).